Reading from the N-terminus, the 255-residue chain is Microfibril-associated glycoprotein 4 (255 aa).

A signal peptide spans 1–21 (MKALLALPLLLLLSTPPCAPQ). The short motif at 26–28 (RGD) is the Cell attachment site element. One can recognise a Fibrinogen C-terminal domain in the interval 32-255 (RFCLQQPLDC…KRTEMKIRRA (224 aa)). N87 and N137 each carry an N-linked (GlcNAc...) asparagine glycan.

In terms of assembly, homodimer. Can also form higher oligomers. Interacts with FBN1, FBN2 and LOX. Interacts with COL1A1 in a Ca (2+)-dependent manner. Interacts with ELN in a Ca (2+)-dependent manner; this interaction promotes ELN self-assembly.

It localises to the secreted. The protein localises to the extracellular space. The protein resides in the extracellular matrix. Could be involved in calcium-dependent cell adhesion or intercellular interactions. May contribute to the elastic fiber assembly and/or maintenance. This Homo sapiens (Human) protein is Microfibril-associated glycoprotein 4 (MFAP4).